A 372-amino-acid polypeptide reads, in one-letter code: 3-dehydroquinate synthase (372 aa).

Residues 113–117, 137–138, Lys150, Lys159, and 177–180 each bind NAD(+); these read GVIGD, TS, and TLKT. Zn(2+) contacts are provided by Glu192, His257, and His274.

Belongs to the sugar phosphate cyclases superfamily. Dehydroquinate synthase family. The cofactor is Co(2+). Zn(2+) serves as cofactor. It depends on NAD(+) as a cofactor.

The protein localises to the cytoplasm. It carries out the reaction 7-phospho-2-dehydro-3-deoxy-D-arabino-heptonate = 3-dehydroquinate + phosphate. The protein operates within metabolic intermediate biosynthesis; chorismate biosynthesis; chorismate from D-erythrose 4-phosphate and phosphoenolpyruvate: step 2/7. In terms of biological role, catalyzes the conversion of 3-deoxy-D-arabino-heptulosonate 7-phosphate (DAHP) to dehydroquinate (DHQ). This is 3-dehydroquinate synthase from Acaryochloris marina (strain MBIC 11017).